The sequence spans 503 residues: REST corepressor 2 (503 aa).

The segment at 1–62 (MPSVMEKSHG…IPECKPDNTS (62 aa)) is disordered. The ELM2 domain occupies 41-126 (SMIRVGSDYQ…RSLADLANFT (86 aa)). The region spanning 127–178 (PFPEEWSVEDKVLFEQAFSFHGKSFQRIQQMLPEKLIPSLVKYYYSWKKTRS) is the SANT 1 domain. Coiled coils occupy residues 182–206 (VMDR…DQIK) and 286–314 (QLET…SLEG). The 52-residue stretch at 327–378 (KLNARWTTDEQLLAVQAVRKYGKDFQAISEVLGNKTPSQVKTFFISYRRRFN) folds into the SANT 2 domain. The tract at residues 385-503 (EWEAEQEPSP…VGSHAESTFS (119 aa)) is disordered. Polar residues predominate over residues 399–412 (TDMSNKTSGSSQTP). Residues 423-442 (SVSSSSQPAPPAAAAAASLS) are compositionally biased toward low complexity.

It belongs to the CoREST family.

It is found in the nucleus. Its function is as follows. May act as a component of a corepressor complex that represses transcription. The sequence is that of REST corepressor 2 (rcor2) from Xenopus laevis (African clawed frog).